The chain runs to 1269 residues: Rho GTPase-activating protein 29 (1269 aa).

Serine 171, serine 176, serine 179, and serine 190 each carry phosphoserine. Residues 192-462 (IELDSMLLKN…SAKLYDPGQE (271 aa)) enclose the F-BAR domain. Residues 296 to 418 (RKNEMEKQRK…EILTQLRKLV (123 aa)) are a coiled coil. Disordered stretches follow at residues 472-523 (SAEE…NSAD) and 540-599 (DSES…NSLG). Serine 499, serine 519, and serine 552 each carry phosphoserine. Residues 540 to 559 (DSESTGGSSESRSLDSESIS) show a composition bias toward low complexity. Residues 612 to 657 (THKFRKLRSPTKCRDCEGIVVFHGVECEECLLVCHRKCLENLVIIC) form a Phorbol-ester/DAG-type zinc finger. The Rho-GAP domain maps to 671–886 (AEFTQVAKKE…FLITYSQKIF (216 aa)). The interval 909–936 (PGYLPKSLLSPEERDPERSMKSLFFSSK) is disordered. Serine 918 carries the post-translational modification Phosphoserine. The segment covering 919 to 928 (PEERDPERSM) has biased composition (basic and acidic residues). Phosphoserine occurs at positions 954 and 1026. Residues 1120-1269 (RSSGDHPVSI…DLEDEIPQFV (150 aa)) form a disordered region. A compositionally biased stretch (polar residues) spans 1128–1145 (SITQPSKPYTEPVRSTRQ). Residues serine 1152 and serine 1154 each carry the phosphoserine modification. The segment covering 1162-1172 (TPRTLQPQHWT) has biased composition (polar residues). Over residues 1229–1241 (SRPEEKAEERDQP) the composition is skewed to basic and acidic residues. Acidic residues predominate over residues 1259-1269 (EDLEDEIPQFV). The interval 1266–1269 (PQFV) is interaction with PTPN13/PTPL1.

In terms of assembly, interacts with PTPN13/PTPL1. Interacts with RAP2A via its coiled coil domain. Interacts with RASIP1.

In terms of biological role, GTPase activator for the Rho-type GTPases by converting them to an inactive GDP-bound state. Has strong activity toward RHOA, and weaker activity toward RAC1 and CDC42. May act as a specific effector of RAP2A to regulate Rho. In concert with RASIP1, suppresses RhoA signaling and dampens ROCK and MYH9 activities in endothelial cells and plays an essential role in blood vessel tubulogenesis. The polypeptide is Rho GTPase-activating protein 29 (ARHGAP29) (Bos taurus (Bovine)).